Reading from the N-terminus, the 148-residue chain is Large ribosomal subunit protein bL9 (148 aa).

It belongs to the bacterial ribosomal protein bL9 family.

In terms of biological role, binds to the 23S rRNA. In Marinobacter nauticus (strain ATCC 700491 / DSM 11845 / VT8) (Marinobacter aquaeolei), this protein is Large ribosomal subunit protein bL9.